Here is a 348-residue protein sequence, read N- to C-terminus: Galanin receptor type 1 (348 aa).

Topologically, residues 1 to 34 (MELAMVNLSEGNGSDPEPPAPESRPLFGIGVENF) are extracellular. N-linked (GlcNAc...) asparagine glycans are attached at residues asparagine 7 and asparagine 12. A helical transmembrane segment spans residues 35–55 (ITLVVFGLIFAMGVLGNSLVI). Over 56 to 70 (TVLARSKPGKPRSTT) the chain is Cytoplasmic. The helical transmembrane segment at 71 to 91 (NLFILNLSIADLAYLLFCIPF) threads the bilayer. Over 92–109 (QATVYALPTWVLGAFICK) the chain is Extracellular. A disulfide bridge connects residues cysteine 108 and cysteine 186. Residues 110 to 131 (FIHYFFTVSMLVSIFTLAAMSV) traverse the membrane as a helical segment. Over 132 to 151 (DRYVAIVHSRRSSSLRVSRN) the chain is Cytoplasmic. Residues 152–172 (ALLGVGFIWALSIAMASPVAY) traverse the membrane as a helical segment. Residues 173 to 197 (HQRLFHRDSNQTFCWEQWPNKLHKK) are Extracellular-facing. Residue asparagine 182 is glycosylated (N-linked (GlcNAc...) asparagine). Residues 198 to 218 (AYVVCTFVFGYLLPLLLICFC) traverse the membrane as a helical segment. At 219–247 (YAKVLNHLHKKLKNMSKKSEASKKKTAQT) the chain is on the cytoplasmic side. The chain crosses the membrane as a helical span at residues 248–268 (VLVVVVVFGISWLPHHVVHLW). Residues 269 to 270 (AE) are Extracellular-facing. A helical membrane pass occupies residues 271–291 (FGAFPLTPASFFFRITAHCLA). Residues 292-348 (YSNSSVNPIIYAFLSENFRKAYKQVFKCHVCDESPRSETKENKSRMDTPPSTNCTHV) are Cytoplasmic-facing. A lipid anchor (S-palmitoyl cysteine) is attached at cysteine 319. Positions 328–337 (SETKENKSRM) are enriched in basic and acidic residues. A disordered region spans residues 328 to 348 (SETKENKSRMDTPPSTNCTHV).

Belongs to the G-protein coupled receptor 1 family. Interacts with GRP39 AND HTR1A. Three cysteine residues are found in the C-terminus, at least one of which may be palmitoylated. As to expression, expression is detected in brain, spinal cord, heart and skeletal muscle.

It is found in the cell membrane. Receptor for the hormone galanin. The activity of this receptor is mediated by G proteins that inhibit adenylate cyclase activity. In Mus musculus (Mouse), this protein is Galanin receptor type 1 (Galr1).